A 341-amino-acid chain; its full sequence is MSVLDALWEDRDVRFDLSAQQMKTRPGEVLIDCLDSIEDTKGNNGDRGRLLVTNLRILWHSLALSRVNVSVGYNCILNITTRTANSKLRGQTEALYILTKCNSTRFEFIFTNLVPGSPRLFTSVMAVHRAYETSKMYRDFKLRSALIQNKQLRLLPQEHVYDKINGVWNLSSDQGNLGTFFITNVRIVWHANMNDSFNVSIPYLQIRSIKIRDSKFGLALVIESSQQSGGYVLGFKIDPVEKLQESVKEINSLHKVYSASPIFGVDYEMEEKPQPLEALTVEQIQDDVEIDSDGHTDAFVAYFADGNKQQDREPVFSEELGLAIEKLKDGFTLQGLWEVMS.

The protein belongs to the BBS5 family. In terms of assembly, part of BBSome complex, that contains BBS1, BBS2, BBS4, BBS5, BBS7, BBS8/TTC8, BBS9 and BBIP10. Binds to phosphoinositides. Interacts with CCDC28B. Interacts with SMO; the interaction is indicative for the association of SMO with the BBsome complex to facilitate ciliary localization of SMO. Interacts with PKD1. Interacts with DLEC1.

The protein localises to the cell projection. It is found in the cilium membrane. Its subcellular location is the cytoplasm. The protein resides in the cytoskeleton. It localises to the cilium basal body. The protein localises to the microtubule organizing center. It is found in the centrosome. Its subcellular location is the centriolar satellite. In terms of biological role, the BBSome complex is thought to function as a coat complex required for sorting of specific membrane proteins to the primary cilia. The BBSome complex is required for ciliogenesis but is dispensable for centriolar satellite function. This ciliogenic function is mediated in part by the Rab8 GDP/GTP exchange factor, which localizes to the basal body and contacts the BBSome. Rab8(GTP) enters the primary cilium and promotes extension of the ciliary membrane. Firstly the BBSome associates with the ciliary membrane and binds to RAB3IP/Rabin8, the guanosyl exchange factor (GEF) for Rab8 and then the Rab8-GTP localizes to the cilium and promotes docking and fusion of carrier vesicles to the base of the ciliary membrane. The BBSome complex, together with the LTZL1, controls SMO ciliary trafficking and contributes to the sonic hedgehog (SHH) pathway regulation. Required for BBSome complex ciliary localization but not for the proper complex assembly. The chain is BBSome complex member BBS5 (BBS5) from Homo sapiens (Human).